The chain runs to 167 residues: NADH-quinone oxidoreductase subunit B 1 (167 aa).

The [4Fe-4S] cluster site is built by Cys-38, Cys-39, Cys-104, and Cys-133.

It belongs to the complex I 20 kDa subunit family. NDH-1 is composed of 14 different subunits. Subunits NuoB, C, D, E, F, and G constitute the peripheral sector of the complex. The cofactor is [4Fe-4S] cluster.

It is found in the cell membrane. The enzyme catalyses a quinone + NADH + 5 H(+)(in) = a quinol + NAD(+) + 4 H(+)(out). Functionally, NDH-1 shuttles electrons from NADH, via FMN and iron-sulfur (Fe-S) centers, to quinones in the respiratory chain. The immediate electron acceptor for the enzyme in this species is believed to be ubiquinone. Couples the redox reaction to proton translocation (for every two electrons transferred, four hydrogen ions are translocated across the cytoplasmic membrane), and thus conserves the redox energy in a proton gradient. This Roseiflexus castenholzii (strain DSM 13941 / HLO8) protein is NADH-quinone oxidoreductase subunit B 1.